The primary structure comprises 259 residues: Cytosolic Fe-S cluster assembly factor Nubp2 homolog (259 aa).

ATP is bound at residue 14–21; that stretch reads GKGGVGKS. [4Fe-4S] cluster-binding residues include C188 and C191.

It belongs to the Mrp/NBP35 ATP-binding proteins family. NUBP2/CFD1 subfamily. Heterotetramer of 2 Nubp1 and 2 Nubp2 chains. [4Fe-4S] cluster is required as a cofactor.

It localises to the cytoplasm. Functionally, component of the cytosolic iron-sulfur (Fe/S) protein assembly (CIA) machinery. Required for maturation of extramitochondrial Fe-S proteins. The Nubp1-Nubp2 heterotetramer forms a Fe-S scaffold complex, mediating the de novo assembly of an Fe-S cluster and its transfer to target apoproteins. The sequence is that of Cytosolic Fe-S cluster assembly factor Nubp2 homolog from Anopheles gambiae (African malaria mosquito).